Reading from the N-terminus, the 361-residue chain is Aminomethyltransferase (361 aa).

Belongs to the GcvT family. The glycine cleavage system is composed of four proteins: P, T, L and H.

The enzyme catalyses N(6)-[(R)-S(8)-aminomethyldihydrolipoyl]-L-lysyl-[protein] + (6S)-5,6,7,8-tetrahydrofolate = N(6)-[(R)-dihydrolipoyl]-L-lysyl-[protein] + (6R)-5,10-methylene-5,6,7,8-tetrahydrofolate + NH4(+). In terms of biological role, the glycine cleavage system catalyzes the degradation of glycine. The sequence is that of Aminomethyltransferase from Bacteroides thetaiotaomicron (strain ATCC 29148 / DSM 2079 / JCM 5827 / CCUG 10774 / NCTC 10582 / VPI-5482 / E50).